Consider the following 450-residue polypeptide: Oxygen-independent coproporphyrinogen III oxidase (450 aa).

In terms of domain architecture, Radical SAM core spans 45-282; sequence IPAGGSISLY…RTLILWDGYQ (238 aa). Position 54 (Tyr54) interacts with S-adenosyl-L-methionine. [4Fe-4S] cluster is bound by residues Cys60 and Cys64. Phe66 is an S-adenosyl-L-methionine binding site. [4Fe-4S] cluster is bound at residue Cys67. Residues Gly111, 112 to 113, Glu144, Gln171, Arg183, Asp208, Ala242, and Ile328 contribute to the S-adenosyl-L-methionine site; that span reads GT.

Belongs to the anaerobic coproporphyrinogen-III oxidase family. In terms of assembly, monomer. It depends on [4Fe-4S] cluster as a cofactor.

It is found in the cytoplasm. It catalyses the reaction coproporphyrinogen III + 2 S-adenosyl-L-methionine = protoporphyrinogen IX + 2 5'-deoxyadenosine + 2 L-methionine + 2 CO2. Its pathway is porphyrin-containing compound metabolism; protoporphyrin-IX biosynthesis; protoporphyrinogen-IX from coproporphyrinogen-III (AdoMet route): step 1/1. Involved in the heme and chlorophyll biosynthesis. Catalyzes the anaerobic oxidative decarboxylation of propionate groups of rings A and B of coproporphyrinogen III to yield the vinyl groups in protoporphyrinogen IX. This chain is Oxygen-independent coproporphyrinogen III oxidase (hemZ), found in Cereibacter sphaeroides (strain ATCC 17023 / DSM 158 / JCM 6121 / CCUG 31486 / LMG 2827 / NBRC 12203 / NCIMB 8253 / ATH 2.4.1.) (Rhodobacter sphaeroides).